A 145-amino-acid chain; its full sequence is Salt stress-induced protein (145 aa).

The region spanning 3–145 (LVKIGLWGGN…IDAIGIYVHP (143 aa)) is the Jacalin-type lectin domain. Repeat copies occupy residues 6–15 (IGLWGGNGGS) and 54–64 (IGPWGGGEGTS). A 2 X approximate repeats, Gly-rich region spans residues 6–64 (IGLWGGNGGSAQDISVPPKKLLGVTIYSSDAIRSIAFNYIGVDGQEYAIGPWGGGEGTS).

As to expression, sheaths and roots from mature plants and seedlings.

The polypeptide is Salt stress-induced protein (SALT) (Oryza sativa subsp. indica (Rice)).